Reading from the N-terminus, the 184-residue chain is Large ribosomal subunit protein uL6 (184 aa).

Belongs to the universal ribosomal protein uL6 family. In terms of assembly, part of the 50S ribosomal subunit.

This protein binds to the 23S rRNA, and is important in its secondary structure. It is located near the subunit interface in the base of the L7/L12 stalk, and near the tRNA binding site of the peptidyltransferase center. This is Large ribosomal subunit protein uL6 from Onion yellows phytoplasma (strain OY-M).